A 143-amino-acid polypeptide reads, in one-letter code: Transcriptional regulator MraZ (143 aa).

2 SpoVT-AbrB domains span residues 5–47 (EYLH…PLDE) and 76–119 (ATEC…SQAL).

It belongs to the MraZ family. As to quaternary structure, forms oligomers.

It is found in the cytoplasm. It localises to the nucleoid. This is Transcriptional regulator MraZ from Desulfitobacterium hafniense (strain Y51).